We begin with the raw amino-acid sequence, 262 residues long: ATP synthase subunit a (262 aa).

A run of 5 helical transmembrane segments spans residues 25–45 (NVHIDTLFFSVLAAIIFLAVF), 86–106 (VAPLALTIFCWVFIMNAIDLI), 130–150 (DISATLGMSLCVFALILFYTV), 204–226 (LIFILIAVMYSANAAIAALGIPL), and 240–260 (LQAFIFMMLTVVYLSIAYNKA).

It belongs to the ATPase A chain family. As to quaternary structure, F-type ATPases have 2 components, CF(1) - the catalytic core - and CF(0) - the membrane proton channel. CF(1) has five subunits: alpha(3), beta(3), gamma(1), delta(1), epsilon(1). CF(0) has three main subunits: a(1), b(2) and c(9-12). The alpha and beta chains form an alternating ring which encloses part of the gamma chain. CF(1) is attached to CF(0) by a central stalk formed by the gamma and epsilon chains, while a peripheral stalk is formed by the delta and b chains.

The protein localises to the cell inner membrane. In terms of biological role, key component of the proton channel; it plays a direct role in the translocation of protons across the membrane. The polypeptide is ATP synthase subunit a (Mannheimia succiniciproducens (strain KCTC 0769BP / MBEL55E)).